A 303-amino-acid polypeptide reads, in one-letter code: Zinc transporter ZIP9-A (303 aa).

The chain crosses the membrane as a helical span at residues 7–27 (ISLLSLAMLVGCYVSGIIPLA). Residue asparagine 29 is glycosylated (N-linked (GlcNAc...) asparagine). The next 5 membrane-spanning stretches (helical) occupy residues 35–55 (LKLVTVLGAGLLCGTALAVII), 102–122 (AYIGVSLVLGFVFMLLVDQIG), 142–162 (ITTTLGLVVHAAADGVALGAA), 172–192 (LIVFVAIMLHKAPAAFGLVSF), and 206–226 (HLLVFALAAPVLSMLTYLGLS). The N-linked (GlcNAc...) asparagine glycan is linked to asparagine 237. A run of 2 helical transmembrane segments spans residues 240–260 (GVAMLFSAGTFLYVATVHVLP) and 282–302 (LEVCALVLGCLIPLVLSIGHQ).

Belongs to the ZIP transporter (TC 2.A.5) family.

It is found in the golgi apparatus. The protein resides in the trans-Golgi network membrane. It localises to the cell membrane. Its subcellular location is the cytoplasm. The protein localises to the perinuclear region. It is found in the mitochondrion. The protein resides in the nucleus. It catalyses the reaction Zn(2+)(in) = Zn(2+)(out). Transports zinc ions across cell and organelle membranes into the cytoplasm and regulates intracellular zinc homeostasis. Participates in the zinc ions efflux out of the secretory compartments. Regulates intracellular zinc level, resulting in the enhancement of AKT1 and MAPK3/MAPK1 (Erk1/2) phosphorylation in response to the BCR activation. Also functions as a membrane androgen receptor that mediates, through a G protein, the non-classical androgen signaling pathway, characterized by the activation of MAPK3/MAPK1 (Erk1/2) and transcription factors CREB1 or ATF1. Moreover, has dual functions as a membrane-bound androgen receptor and as an androgen-dependent zinc transporter both of which are mediated through an inhibitory G protein (Gi) that mediates both MAP kinase and zinc signaling leading to the androgen-dependent apoptotic process. This Xenopus laevis (African clawed frog) protein is Zinc transporter ZIP9-A (slc39a9-a).